Reading from the N-terminus, the 151-residue chain is Transcriptional repressor NrdR (151 aa).

A zinc finger spans residues 3–34; sequence CPYCAYGESKVVDSRSTEDGSSIRRRRECLKC. The ATP-cone domain occupies 49–139; sequence ILVIKKNMSR…VYRQFKDINT (91 aa).

The protein belongs to the NrdR family. Requires Zn(2+) as cofactor.

Functionally, negatively regulates transcription of bacterial ribonucleotide reductase nrd genes and operons by binding to NrdR-boxes. The protein is Transcriptional repressor NrdR of Clostridium botulinum (strain 657 / Type Ba4).